Reading from the N-terminus, the 637-residue chain is Proton myo-inositol cotransporter (637 aa).

Residues 1–65 (MSRKASEDVE…AARRQFQRDE (65 aa)) are Cytoplasmic-facing. A Phosphoserine modification is found at Ser-6. Positions 16-38 (LSSLMGERRRRQPEPGAPGGERS) are disordered. Phosphoserine is present on residues Ser-44 and Ser-47. A helical transmembrane segment spans residues 66-86 (TPAFVYAAAAFSALGGFLFGY). Over 87 to 114 (DTGVVSGAMLLLRRQMRLGAMWQELLVS) the chain is Extracellular. A helical membrane pass occupies residues 115–135 (GAVGAAAVAALAGGALNGALG). Topologically, residues 136–137 (RR) are cytoplasmic. Residues 138-158 (SAILLASALCTVGSAVLAAAA) traverse the membrane as a helical segment. Residues 159-167 (NKETLLAGR) are Extracellular-facing. A helical transmembrane segment spans residues 168 to 188 (LVVGLGIGIASMTVPVYIAEV). Over 189–201 (SPPNLRGRLVTIN) the chain is Cytoplasmic. Residues 202 to 222 (TLFITGGQFFASVVDGAFSYL) form a helical membrane-spanning segment. Residues 223–228 (QKDGWR) lie on the Extracellular side of the membrane. A helical membrane pass occupies residues 229–249 (YMLGLAAIPAVIQFLGFLFLP). At 250 to 313 (ESPRWLIQKG…RMLSYPPTRR (64 aa)) the chain is on the cytoplasmic side. A helical membrane pass occupies residues 314–334 (ALAVGCGLQMFQQLSGINTIM). The Extracellular portion of the chain corresponds to 335–352 (YYSATILQMSGVEDDRLA). Residues 353 to 373 (IWLASITAFTNFIFTLVGVWL) form a helical membrane-spanning segment. Residues 374–382 (VEKVGRRKL) lie on the Cytoplasmic side of the membrane. A helical membrane pass occupies residues 383-403 (TFGSLAGTTVALTILALGFLL). Residues 404-497 (SAQVSPRVTF…SFCPTPYSWT (94 aa)) are Extracellular-facing. Asn-422, Asn-447, and Asn-474 each carry an N-linked (GlcNAc...) asparagine glycan. A helical membrane pass occupies residues 498–518 (ALVGLVLYLVFFAPGMGPMPW). At 519–538 (TVNSEIYPLWARSTGNACSA) the chain is on the cytoplasmic side. Residues 539–559 (GINWIFNVLVSLTFLHTAEYL) traverse the membrane as a helical segment. Residues 560 to 562 (TYY) lie on the Extracellular side of the membrane. Residues 563-583 (GAFFLYAGFAAVGLLFVYGCL) traverse the membrane as a helical segment. At 584 to 637 (PETKGKKLEEIESLFDHRLCTCGTADSDEGRYIEYIRVKGSNYHLSDNDASDVE) the chain is on the cytoplasmic side. 2 positions are modified to phosphoserine: Ser-629 and Ser-634.

Belongs to the major facilitator superfamily. Sugar transporter (TC 2.A.1.1) family.

It localises to the cell membrane. The enzyme catalyses myo-inositol(out) + H(+)(out) = myo-inositol(in) + H(+)(in). Functionally, h(+)-myo-inositol cotransporter. Can also transport related stereoisomers. This chain is Proton myo-inositol cotransporter, found in Rattus norvegicus (Rat).